The primary structure comprises 350 residues: Chorismate synthase (350 aa).

2 residues coordinate NADP(+): R39 and R45. The interval 85-104 (KDKKVPPVTRPRPGHADLPG) is disordered. FMN contacts are provided by residues 119–121 (RAS), 213–214 (QG), G258, 273–277 (KPIPT), and R299.

This sequence belongs to the chorismate synthase family. In terms of assembly, homotetramer. It depends on FMNH2 as a cofactor.

The enzyme catalyses 5-O-(1-carboxyvinyl)-3-phosphoshikimate = chorismate + phosphate. The protein operates within metabolic intermediate biosynthesis; chorismate biosynthesis; chorismate from D-erythrose 4-phosphate and phosphoenolpyruvate: step 7/7. In terms of biological role, catalyzes the anti-1,4-elimination of the C-3 phosphate and the C-6 proR hydrogen from 5-enolpyruvylshikimate-3-phosphate (EPSP) to yield chorismate, which is the branch point compound that serves as the starting substrate for the three terminal pathways of aromatic amino acid biosynthesis. This reaction introduces a second double bond into the aromatic ring system. This chain is Chorismate synthase, found in Caldanaerobacter subterraneus subsp. tengcongensis (strain DSM 15242 / JCM 11007 / NBRC 100824 / MB4) (Thermoanaerobacter tengcongensis).